Consider the following 743-residue polypeptide: Protein will decrease acetylation (743 aa).

6 WD repeats span residues 389–428 (ERSR…CRGK), 493–524 (LRGH…MRCW), 535–576 (YRSH…ALII), 577–618 (YAGH…LMRV), 619–660 (FADC…QLAE), and 661–702 (LKDH…PMSD).

The protein belongs to the WD repeat TAF5 family. In terms of assembly, component of the Spt-Ada-Gcn5 acetyltransferase (SAGA) complex consisting of wda/Taf5L, Saf6, Taf9, Taf10b, Taf12, Ada1, Spt3, Spt7, Spt20, Sf3b3, Sf3b5, Nipped-A/Tra1, a histone acetyltransferase (HAT) module made up of Gcn5, Ada2b (Isoform B), Ada3 and Sgf29, and a deubiquitinase (DUB) module made up of not/nonstop, Sgf11 and e(y)2 tethered to SAGA by Atxn7. Not essential for the assembly or integrity of the SAGA complex. Not a component of the Ada2a-containing ATAC complex.

It is found in the nucleus. The protein resides in the chromosome. In terms of biological role, component of the transcription regulatory complex SAGA, a multiprotein complex that activates transcription by remodeling chromatin and mediating histone acetylation and deubiquitination. The SAGA complex predominantly acetylates histone H3. Involved in acetylation of histone H3 on 'Lys-10' (H3K9ac) by the SAGA complex in the larval central nervous system. Involved in SAGA complex coactivator functions. Required for oogenesis. This Drosophila melanogaster (Fruit fly) protein is Protein will decrease acetylation.